The following is a 270-amino-acid chain: uncharacterized protein (270 aa).

One can recognise an ABC transporter domain in the interval 34–266 (LIARGLTKSY…PDVRRLYLGD (233 aa)). Position 66–73 (66–73 (GPNGAGKT)) interacts with ATP.

The protein belongs to the ABC transporter superfamily.

This is an uncharacterized protein from Rhizobium meliloti (strain 1021) (Ensifer meliloti).